Reading from the N-terminus, the 243-residue chain is Adenylate kinase 4 (243 aa).

Residue 40 to 45 (GSGKGT) participates in ATP binding. The interval 60–89 (ATGDMLRAAVAAKTPLGVKAKEAMDKGELV) is NMP. AMP is bound by residues Thr61, Arg66, 87-89 (ELV), 115-118 (GFPR), and Gln122. The LID stretch occupies residues 156-193 (GRWIHPSSGRSYHTKFAPPKVPGVDDVTGEPLIQRKDD). Arg157 is an ATP binding site. Residues Arg190 and Arg201 each coordinate AMP.

Belongs to the adenylate kinase family.

The protein localises to the cytoplasm. It catalyses the reaction AMP + ATP = 2 ADP. Its function is as follows. Catalyzes the reversible transfer of the terminal phosphate group between ATP and AMP. Plays an important role in cellular energy homeostasis and in adenine nucleotide metabolism. This chain is Adenylate kinase 4 (ADK-B), found in Oryza sativa subsp. japonica (Rice).